The sequence spans 239 residues: tRNA (guanine-N(7)-)-methyltransferase (239 aa).

4 residues coordinate S-adenosyl-L-methionine: glutamate 69, glutamate 94, aspartate 121, and aspartate 144. The active site involves aspartate 144. Residues lysine 148, aspartate 180, and 217–220 (TKFE) contribute to the substrate site.

It belongs to the class I-like SAM-binding methyltransferase superfamily. TrmB family. As to quaternary structure, monomer.

It carries out the reaction guanosine(46) in tRNA + S-adenosyl-L-methionine = N(7)-methylguanosine(46) in tRNA + S-adenosyl-L-homocysteine. The protein operates within tRNA modification; N(7)-methylguanine-tRNA biosynthesis. In terms of biological role, catalyzes the formation of N(7)-methylguanine at position 46 (m7G46) in tRNA. This chain is tRNA (guanine-N(7)-)-methyltransferase, found in Buchnera aphidicola subsp. Acyrthosiphon pisum (strain Tuc7).